Reading from the N-terminus, the 906-residue chain is Eukaryotic translation initiation factor 3 subunit C (906 aa).

Residues 1-22 (MSRFFANGSDSESESSEEEVQA) form a disordered region. The segment covering 11–20 (SESESSEEEV) has biased composition (acidic residues). Phosphoserine occurs at positions 34, 165, 176, and 185. The interval 158 to 283 (REAPDQESEA…KRPEDDEDGE (126 aa)) is disordered. The segment covering 162 to 186 (DQESEAEDEEAAQDSDGGDAGDDSD) has biased composition (acidic residues). The segment covering 195–209 (EAAPKVAKTVPAKAA) has biased composition (low complexity). Residues 211–237 (ADDDDSDDSIDWDSDSETETESSDDEN) are compositionally biased toward acidic residues. A compositionally biased stretch (basic and acidic residues) spans 242–270 (MRERFLKRTTEKEEKDDDKRKDKRKEQKI). Residues 641 to 817 (FHMHINLELL…ETVVMHRSEP (177 aa)) enclose the PCI domain. 2 disordered regions span residues 853–873 (GNMG…NWGG) and 887–906 (QRGR…IDEE). Low complexity predominate over residues 894 to 906 (QQQQQQVQTIDEE).

Belongs to the eIF-3 subunit C family. As to quaternary structure, component of the eukaryotic translation initiation factor 3 (eIF-3) complex. The eIF-3 complex interacts with pix.

The protein localises to the cytoplasm. Functionally, component of the eukaryotic translation initiation factor 3 (eIF-3) complex, which is involved in protein synthesis of a specialized repertoire of mRNAs and, together with other initiation factors, stimulates binding of mRNA and methionyl-tRNAi to the 40S ribosome. The eIF-3 complex specifically targets and initiates translation of a subset of mRNAs involved in cell proliferation. The chain is Eukaryotic translation initiation factor 3 subunit C from Drosophila ananassae (Fruit fly).